The following is a 456-amino-acid chain: Senecionine N-oxygenase (456 aa).

The signal sequence occupies residues 1–22 (MFRKFVIMLVLSLLVAAGISQA). 32-37 (GAGYSG) provides a ligand contact to FAD. Residue 215–220 (GAGPSG) participates in NADP(+) binding.

This sequence belongs to the FMO family. As to quaternary structure, homotetramer. The cofactor is FAD. As to expression, hemolymph.

It localises to the secreted. The enzyme catalyses senecionine + NADPH + O2 = senecionine N-oxide + NADP(+) + H2O. Its function is as follows. NADPH-dependent monooxygenase that detoxifies senecionine and similar plant alkaloids that are ingested by the larvae. Is active towards a narrow range of related substrates with highest activity towards senecionine, followed by seneciphylline, retrorsine, monocrotaline, senecivernine, axillarine and axillaridine. This is Senecionine N-oxygenase (sno1) from Tyria jacobaeae (Cinnabar moth).